A 398-amino-acid polypeptide reads, in one-letter code: NADH-ubiquinone oxidoreductase 49 kDa subunit (398 aa).

Belongs to the complex I 49 kDa subunit family.

The protein localises to the mitochondrion. The catalysed reaction is a ubiquinone + NADH + 5 H(+)(in) = a ubiquinol + NAD(+) + 4 H(+)(out). Its function is as follows. Core subunit of the mitochondrial membrane respiratory chain NADH dehydrogenase (Complex I) that is believed to belong to the minimal assembly required for catalysis. Complex I functions in the transfer of electrons from NADH to the respiratory chain. The immediate electron acceptor for the enzyme is believed to be ubiquinone. Component of the iron-sulfur (IP) fragment of the enzyme. Component of the iron-sulfur (IP) fragment of the enzyme. The polypeptide is NADH-ubiquinone oxidoreductase 49 kDa subunit (NAD7) (Pylaiella littoralis (Seaweed)).